We begin with the raw amino-acid sequence, 156 residues long: N-glycosidase Npun_R5314 (156 aa).

This sequence belongs to the YbiA family.

The enzyme catalyses 2,5-diamino-6-hydroxy-4-(5-phosphoribosylamino)-pyrimidine + H2O = 2,5,6-triamino-4-hydroxypyrimidine + D-ribose 5-phosphate. It catalyses the reaction 5-amino-6-(5-phospho-D-ribosylamino)uracil + H2O = 5,6-diaminouracil + D-ribose 5-phosphate. Functionally, catalyzes the hydrolysis of the N-glycosidic bond in the first two intermediates of riboflavin biosynthesis, which are highly reactive metabolites, yielding relatively innocuous products. Thus, can divert a surplus of harmful intermediates into relatively harmless products and pre-empt the damage these intermediates would otherwise do. May act on other substrates in vivo. Has no activity against GTP, nucleoside monophosphates or ADP-ribose. This Nostoc punctiforme (strain ATCC 29133 / PCC 73102) protein is N-glycosidase Npun_R5314.